The sequence spans 806 residues: GPI ethanolamine phosphate transferase 2 (806 aa).

N-linked (GlcNAc...) asparagine glycosylation is found at N70, N184, and N242. Helical transmembrane passes span 396-416 (MLFL…YCYI), 425-445 (SVLM…SSFV), and 451-471 (IWWW…PSCT). N488 is a glycosylation site (N-linked (GlcNAc...) asparagine). Transmembrane regions (helical) follow at residues 508-528 (PSIK…DGFT), 532-552 (LLSI…TCWA), 593-613 (LFFK…VVFA), 624-644 (LFTI…FLVF), 664-684 (CEMF…QFGG), 706-726 (IYVV…YWSL), 745-765 (LSSM…CICM), and 782-804 (LLGW…LLMV).

It belongs to the PIGG/PIGN/PIGO family. PIGG subfamily.

It is found in the endoplasmic reticulum membrane. It participates in glycolipid biosynthesis; glycosylphosphatidylinositol-anchor biosynthesis. Functionally, ethanolamine phosphate transferase involved in glycosylphosphatidylinositol-anchor biosynthesis. Transfers ethanolamine phosphate to the GPI second mannose. The protein is GPI ethanolamine phosphate transferase 2 (LAS21) of Eremothecium gossypii (strain ATCC 10895 / CBS 109.51 / FGSC 9923 / NRRL Y-1056) (Yeast).